A 131-amino-acid chain; its full sequence is MKRRTAREKALQALFQIDVSDIAVNEAIEHALDEEKTDPFFEQLVHGVLEHQDQLDEMISKHLVNWKLDRIANVDRAILRLAAYEMAYAEDIPVNVSMNEAIELAKRFGDDKATKFVNGVLSNIKSDIEQS.

Belongs to the NusB family.

Its function is as follows. Involved in transcription antitermination. Required for transcription of ribosomal RNA (rRNA) genes. Binds specifically to the boxA antiterminator sequence of the ribosomal RNA (rrn) operons. The polypeptide is Transcription antitermination protein NusB (Bacillus subtilis (strain 168)).